The sequence spans 434 residues: Trigger factor (434 aa).

Residues 161-246 enclose the PPIase FKBP-type domain; sequence EDRVVIDFTG…VKQVQAPVLP (86 aa).

This sequence belongs to the FKBP-type PPIase family. Tig subfamily.

It localises to the cytoplasm. It catalyses the reaction [protein]-peptidylproline (omega=180) = [protein]-peptidylproline (omega=0). Functionally, involved in protein export. Acts as a chaperone by maintaining the newly synthesized protein in an open conformation. Functions as a peptidyl-prolyl cis-trans isomerase. In Dechloromonas aromatica (strain RCB), this protein is Trigger factor.